The primary structure comprises 202 residues: Small ribosomal subunit protein uS4 (202 aa).

The 67-residue stretch at 91–157 folds into the S4 RNA-binding domain; it reads CRLDNVVYRA…TPFIVARETH (67 aa).

It belongs to the universal ribosomal protein uS4 family. Part of the 30S ribosomal subunit. Contacts protein S5. The interaction surface between S4 and S5 is involved in control of translational fidelity.

One of the primary rRNA binding proteins, it binds directly to 16S rRNA where it nucleates assembly of the body of the 30S subunit. Its function is as follows. With S5 and S12 plays an important role in translational accuracy. This is Small ribosomal subunit protein uS4 from Nocardioides sp. (strain ATCC BAA-499 / JS614).